A 201-amino-acid polypeptide reads, in one-letter code: Probable DNA replication complex GINS protein PSF1 (201 aa).

It belongs to the GINS1/PSF1 family. In terms of assembly, component of the GINS complex which is a heterotetramer of gins1, gins2, gins3 and gins4.

The protein resides in the nucleus. Its function is as follows. The GINS complex plays an essential role in the initiation of DNA replication. This Caenorhabditis briggsae protein is Probable DNA replication complex GINS protein PSF1.